The chain runs to 158 residues: NAD(P)H-quinone oxidoreductase subunit J, chloroplastic (158 aa).

It belongs to the complex I 30 kDa subunit family. NDH is composed of at least 16 different subunits, 5 of which are encoded in the nucleus.

The protein localises to the plastid. It is found in the chloroplast thylakoid membrane. It catalyses the reaction a plastoquinone + NADH + (n+1) H(+)(in) = a plastoquinol + NAD(+) + n H(+)(out). It carries out the reaction a plastoquinone + NADPH + (n+1) H(+)(in) = a plastoquinol + NADP(+) + n H(+)(out). NDH shuttles electrons from NAD(P)H:plastoquinone, via FMN and iron-sulfur (Fe-S) centers, to quinones in the photosynthetic chain and possibly in a chloroplast respiratory chain. The immediate electron acceptor for the enzyme in this species is believed to be plastoquinone. Couples the redox reaction to proton translocation, and thus conserves the redox energy in a proton gradient. The protein is NAD(P)H-quinone oxidoreductase subunit J, chloroplastic of Buxus microphylla (Littleleaf boxwood).